Here is a 360-residue protein sequence, read N- to C-terminus: MKYRSNETFTHKQADKIGVLITNLGTPEAPEKGALKRYLREFLSDTRVVEVPKLIWWMILNLVILNIRPKRSAHAYSTVWTDRGSPLMFHTQDQTNALATSMQQKYGDKVVVDFAMRYGSPSIESVTQNMLEKGVRQLLVLPLYPQYSGATNGSTFDALGEVLRKTRWIPDVRFISHYHDFTPYIDAVAGSITEHWATHGRADKLIFTYHGIPKRYLTAGDPYHCECYKTSRLVAEKLGLGKHEYMVTFQSRFGREEWLQPYTDHTLKSLPEQGVKSVQMICPGFSADCLETIEEIGIENRDYFLEAGGQRYEYIAALNAQPQHIAALESLIEKNLGGWECPDRNSQLSADLATAMGSDK.

Fe cation contacts are provided by H210 and E291.

It belongs to the ferrochelatase family.

The protein resides in the cytoplasm. The catalysed reaction is heme b + 2 H(+) = protoporphyrin IX + Fe(2+). It participates in porphyrin-containing compound metabolism; protoheme biosynthesis; protoheme from protoporphyrin-IX: step 1/1. Its function is as follows. Catalyzes the ferrous insertion into protoporphyrin IX. The polypeptide is Ferrochelatase (Pseudoalteromonas atlantica (strain T6c / ATCC BAA-1087)).